Reading from the N-terminus, the 89-residue chain is Small ribosomal subunit protein uS15 (89 aa).

The protein belongs to the universal ribosomal protein uS15 family. As to quaternary structure, part of the 30S ribosomal subunit. Forms a bridge to the 50S subunit in the 70S ribosome, contacting the 23S rRNA.

Its function is as follows. One of the primary rRNA binding proteins, it binds directly to 16S rRNA where it helps nucleate assembly of the platform of the 30S subunit by binding and bridging several RNA helices of the 16S rRNA. Forms an intersubunit bridge (bridge B4) with the 23S rRNA of the 50S subunit in the ribosome. This chain is Small ribosomal subunit protein uS15, found in Chlorobium luteolum (strain DSM 273 / BCRC 81028 / 2530) (Pelodictyon luteolum).